An 88-amino-acid polypeptide reads, in one-letter code: Secretion system apparatus protein SsaS (88 aa).

Transmembrane regions (helical) follow at residues 15–35 (WIVLFTSMPVVLVASVVGVIV) and 55–75 (LLAIAITLMVSYPWLSGILLN).

This sequence belongs to the FliQ/MopD/SpaQ family.

The protein resides in the cell membrane. In terms of biological role, part of a type III secretion system. In Salmonella typhimurium (strain LT2 / SGSC1412 / ATCC 700720), this protein is Secretion system apparatus protein SsaS (ssaS).